Reading from the N-terminus, the 1188-residue chain is DNA-directed RNA polymerase subunit beta (1188 aa).

Belongs to the RNA polymerase beta chain family. In terms of assembly, the RNAP catalytic core consists of 2 alpha, 1 beta, 1 beta' and 1 omega subunit. When a sigma factor is associated with the core the holoenzyme is formed, which can initiate transcription.

The enzyme catalyses RNA(n) + a ribonucleoside 5'-triphosphate = RNA(n+1) + diphosphate. Functionally, DNA-dependent RNA polymerase catalyzes the transcription of DNA into RNA using the four ribonucleoside triphosphates as substrates. This Streptococcus pyogenes serotype M3 (strain ATCC BAA-595 / MGAS315) protein is DNA-directed RNA polymerase subunit beta.